A 502-amino-acid chain; its full sequence is ATP synthase subunit alpha (502 aa).

169 to 176 is a binding site for ATP; that stretch reads GDRQTGKT.

Belongs to the ATPase alpha/beta chains family. In terms of assembly, F-type ATPases have 2 components, CF(1) - the catalytic core - and CF(0) - the membrane proton channel. CF(1) has five subunits: alpha(3), beta(3), gamma(1), delta(1), epsilon(1). CF(0) has three main subunits: a(1), b(2) and c(9-12). The alpha and beta chains form an alternating ring which encloses part of the gamma chain. CF(1) is attached to CF(0) by a central stalk formed by the gamma and epsilon chains, while a peripheral stalk is formed by the delta and b chains.

It is found in the cell membrane. The catalysed reaction is ATP + H2O + 4 H(+)(in) = ADP + phosphate + 5 H(+)(out). Produces ATP from ADP in the presence of a proton gradient across the membrane. The alpha chain is a regulatory subunit. In Priestia megaterium (strain ATCC 12872 / QMB1551) (Bacillus megaterium), this protein is ATP synthase subunit alpha.